A 550-amino-acid chain; its full sequence is Iduronate 2-sulfatase (550 aa).

The first 25 residues, Met-1–Gly-25, serve as a signal peptide directing secretion. A propeptide spanning residues Ser-26–Thr-33 is cleaved from the precursor. Asp-45, Asp-46, and Cys-84 together coordinate Ca(2+). The active-site Nucleophile is the Cys-84. Cys-84 carries the 3-oxoalanine (Cys) modification. Asn-115 carries N-linked (GlcNAc...) asparagine glycosylation. His-138 is a catalytic residue. N-linked (GlcNAc...) asparagine glycosylation occurs at Asn-144. A disulfide bridge connects residues Cys-171 and Cys-184. 3 N-linked (GlcNAc...) asparagine glycosylation sites follow: Asn-246, Asn-280, and Asn-325. Residues Asp-334 and His-335 each coordinate Ca(2+). Cys-422 and Cys-432 are disulfide-bonded. N-linked (GlcNAc...) asparagine glycans are attached at residues Asn-513 and Asn-537.

Belongs to the sulfatase family. In terms of assembly, monomer. The 58-kDa mature form is composed of two chains resulting from proteolitic processing, the 42-kDa chain and the 14-kDa chain that remain stably associated and form the 58-kDa intermediate form which is enzymatically active. The cofactor is Ca(2+). Post-translationally, synthesized as a 75-kDa precursor form in the endoplasmic reticulum (ER), and then processed by proteolytic cleavage through various intermediates to yield a 55-kDa mature form, with the release of an 18 kDa polypeptide. The conversion to 3-oxoalanine (also known as C-formylglycine, FGly), of a serine or cysteine residue in prokaryotes and of a cysteine residue in eukaryotes, is critical for catalytic activity. In terms of tissue distribution, liver, kidney, lung, and placenta.

The protein localises to the lysosome. The enzyme catalyses Hydrolysis of the 2-sulfate groups of the L-iduronate 2-sulfate units of dermatan sulfate, heparan sulfate and heparin.. Functionally, lysosomal enzyme involved in the degradation pathway of dermatan sulfate and heparan sulfate. The sequence is that of Iduronate 2-sulfatase (IDS) from Homo sapiens (Human).